Here is a 235-residue protein sequence, read N- to C-terminus: Large ribosomal subunit protein uL1c (235 aa).

The protein belongs to the universal ribosomal protein uL1 family. Part of the 50S ribosomal subunit.

Its subcellular location is the plastid. It localises to the chloroplast. Functionally, binds directly to 23S rRNA. Might be involved in E site tRNA release (Potential). The sequence is that of Large ribosomal subunit protein uL1c (rpl1) from Gracilaria tenuistipitata var. liui (Red alga).